An 80-amino-acid chain; its full sequence is Exodeoxyribonuclease 7 small subunit (80 aa).

Belongs to the XseB family. As to quaternary structure, heterooligomer composed of large and small subunits.

Its subcellular location is the cytoplasm. The catalysed reaction is Exonucleolytic cleavage in either 5'- to 3'- or 3'- to 5'-direction to yield nucleoside 5'-phosphates.. Functionally, bidirectionally degrades single-stranded DNA into large acid-insoluble oligonucleotides, which are then degraded further into small acid-soluble oligonucleotides. This chain is Exodeoxyribonuclease 7 small subunit, found in Vibrio atlanticus (strain LGP32) (Vibrio splendidus (strain Mel32)).